Reading from the N-terminus, the 181-residue chain is Adenine phosphoribosyltransferase (181 aa).

This sequence belongs to the purine/pyrimidine phosphoribosyltransferase family. In terms of assembly, homodimer.

The protein localises to the cytoplasm. It catalyses the reaction AMP + diphosphate = 5-phospho-alpha-D-ribose 1-diphosphate + adenine. It participates in purine metabolism; AMP biosynthesis via salvage pathway; AMP from adenine: step 1/1. Its function is as follows. Catalyzes a salvage reaction resulting in the formation of AMP, that is energically less costly than de novo synthesis. This chain is Adenine phosphoribosyltransferase, found in Rhodopseudomonas palustris (strain BisB5).